A 136-amino-acid chain; its full sequence is Nuclear receptor 2C2-associated protein (136 aa).

The protein belongs to the NR2C2AP family.

It localises to the nucleus. Its function is as follows. May act as a repressor of nr2c2-mediated transactivation by suppressing the binding between nr2c2 and its response element in target genes. The protein is Nuclear receptor 2C2-associated protein (nr2c2ap) of Xenopus tropicalis (Western clawed frog).